Here is a 495-residue protein sequence, read N- to C-terminus: MIAGLVLVVLLTKYLQRVFLHPLSKFPGPSIAAVSHLWEFWHDWVKNGTFLEGVADLHRSYKSPVVRIAPNHLHVNDVEVYHQVFKVNTNFYKAPYFYEAFGFATSIATITNPHRHKPLRTTVAPMFTGTAVDGMSDEMYDMVRKATDLLAARSTGTGNKFNVMQFLRCITTDVSCNLIFGETLDLVSNGYHSDRFLGNLDTFVENVWIMVHAPWIAQFALMLPNSLTDKIVPGYAYFREQCISWIDKVRARRAKGITLMRNGRPTLFDVLMDDNPDKNYKVPSKSELIDQAFLFAIAGTDTTSMATTFAVFHILNNPAVRERLCEELRGASAIIRDQYNYREVRKLPYLSAVIKEALRMSSPFPGRLPRVVPPEGMKLDNKFVPGGTIISISSRCIMDDPKIYPEPEKFLPERWMGENAKSMDRNMIAFGKGSRSCLGTNLAYLKMYTMLSTMFCRWDLRLVSPTDHKLRYLDHALIEMKSQVVVEILADHWTT.

A helical membrane pass occupies residues 1-21 (MIAGLVLVVLLTKYLQRVFLH). Asn47 is a glycosylation site (N-linked (GlcNAc...) asparagine). Cys437 serves as a coordination point for heme.

The protein belongs to the cytochrome P450 family. It depends on heme as a cofactor.

The protein resides in the membrane. The catalysed reaction is dauca-4,7-diene + 3 reduced [NADPH--hemoprotein reductase] + 3 O2 = asperaculane D + 3 oxidized [NADPH--hemoprotein reductase] + 4 H2O + 4 H(+). It participates in secondary metabolite biosynthesis. Its function is as follows. Cytochrome P450 monooxygenase; part of the gene cluster that mediates the biosynthesis of aculenes, a unique type of norsesquiterpenes that contain a nordaucane skeleton linked to an L-proline moiety and are of mixed biosynthetic origin. The pathway begins with the synthesis of dauca-4,7-diene by the terpene cyclase aneC using farnesyl pyrophosphate (FPP) as substrate. The cytochrome P450 monooxygenase aneF then performs the initial oxidation at C-12 of dauca-4,7-diene to yield asperaculane D. Asperaculane D is substrate of the cytochrome P450 monooxygenase aneD for C-10 hydroxylation to yield asperaculane E. The cytochrome P450 monooxygenase aneG then converts asperaculane E into aculene D via C-2 oxidation. The monomodular nonribosomal peptide synthtase aneB adenylates L-proline and the thiohydrolase aneE transfers this activated L-proline derivative to aculenes D and C to produce respectively aculenes B and A. The dioxygenase aneA converts aculene D into aculene C, and aculene B into aculene A by introducing the 5,6-alkene moiety. Asperculanes A, B, C and F, as well as 14-prolyl asperculane C, might be shunt products of the pathway. This Aspergillus aculeatus (strain ATCC 16872 / CBS 172.66 / WB 5094) protein is Cytochrome P450 monooxygenase aneF.